A 106-amino-acid polypeptide reads, in one-letter code: Replication restart protein PriB (106 aa).

The SSB domain occupies 4–103 (TNRLVLSGTV…LHAEQIEFID (100 aa)).

Belongs to the PriB family. As to quaternary structure, homodimer. Interacts with PriA and DnaT. Component of the replication restart primosome. Primosome assembly occurs via a 'hand-off' mechanism. PriA binds to replication forks, subsequently PriB then DnaT bind; DnaT then displaces ssDNA to generate the helicase loading substrate.

Involved in the restart of stalled replication forks, which reloads the replicative helicase on sites other than the origin of replication; the PriA-PriB pathway is the major replication restart pathway. During primosome assembly it facilitates complex formation between PriA and DnaT on DNA; stabilizes PriA on DNA. Stimulates the DNA unwinding activity of PriA helicase. This is Replication restart protein PriB from Yersinia enterocolitica serotype O:8 / biotype 1B (strain NCTC 13174 / 8081).